The following is a 620-amino-acid chain: 1-deoxy-D-xylulose-5-phosphate synthase (620 aa).

Residues H80 and 121–123 (GHS) contribute to the thiamine diphosphate site. Residue D152 participates in Mg(2+) binding. Thiamine diphosphate contacts are provided by residues 153-154 (GA), N181, Y288, and E370. N181 contributes to the Mg(2+) binding site.

The protein belongs to the transketolase family. DXPS subfamily. Homodimer. Mg(2+) serves as cofactor. It depends on thiamine diphosphate as a cofactor.

It catalyses the reaction D-glyceraldehyde 3-phosphate + pyruvate + H(+) = 1-deoxy-D-xylulose 5-phosphate + CO2. Its pathway is metabolic intermediate biosynthesis; 1-deoxy-D-xylulose 5-phosphate biosynthesis; 1-deoxy-D-xylulose 5-phosphate from D-glyceraldehyde 3-phosphate and pyruvate: step 1/1. Catalyzes the acyloin condensation reaction between C atoms 2 and 3 of pyruvate and glyceraldehyde 3-phosphate to yield 1-deoxy-D-xylulose-5-phosphate (DXP). The sequence is that of 1-deoxy-D-xylulose-5-phosphate synthase from Cronobacter sakazakii (strain ATCC BAA-894) (Enterobacter sakazakii).